A 461-amino-acid chain; its full sequence is tRNA modification GTPase MnmE (461 aa).

3 residues coordinate (6S)-5-formyl-5,6,7,8-tetrahydrofolate: Arg22, Glu87, and Arg126. The region spanning 222 to 382 (GITAVIAGKP…LENKLYEILI (161 aa)) is the TrmE-type G domain. Asn232 is a K(+) binding site. GTP-binding positions include 232-237 (NVGKSS), 251-257 (TDIPGTT), 276-279 (DTAG), and 363-365 (SAR). Residue Ser236 participates in Mg(2+) binding. Positions 251, 253, and 256 each coordinate K(+). Thr257 contributes to the Mg(2+) binding site. Lys461 provides a ligand contact to (6S)-5-formyl-5,6,7,8-tetrahydrofolate.

Belongs to the TRAFAC class TrmE-Era-EngA-EngB-Septin-like GTPase superfamily. TrmE GTPase family. Homodimer. Heterotetramer of two MnmE and two MnmG subunits. The cofactor is K(+).

The protein resides in the cytoplasm. Exhibits a very high intrinsic GTPase hydrolysis rate. Involved in the addition of a carboxymethylaminomethyl (cmnm) group at the wobble position (U34) of certain tRNAs, forming tRNA-cmnm(5)s(2)U34. This chain is tRNA modification GTPase MnmE, found in Carboxydothermus hydrogenoformans (strain ATCC BAA-161 / DSM 6008 / Z-2901).